The sequence spans 293 residues: Bifunctional protein FolD (293 aa).

NADP(+) is bound by residues 165-167, Ser190, and Ile231; that span reads GRS.

This sequence belongs to the tetrahydrofolate dehydrogenase/cyclohydrolase family. As to quaternary structure, homodimer.

The enzyme catalyses (6R)-5,10-methylene-5,6,7,8-tetrahydrofolate + NADP(+) = (6R)-5,10-methenyltetrahydrofolate + NADPH. It carries out the reaction (6R)-5,10-methenyltetrahydrofolate + H2O = (6R)-10-formyltetrahydrofolate + H(+). It participates in one-carbon metabolism; tetrahydrofolate interconversion. Its function is as follows. Catalyzes the oxidation of 5,10-methylenetetrahydrofolate to 5,10-methenyltetrahydrofolate and then the hydrolysis of 5,10-methenyltetrahydrofolate to 10-formyltetrahydrofolate. This chain is Bifunctional protein FolD, found in Synechococcus sp. (strain WH7803).